We begin with the raw amino-acid sequence, 279 residues long: Urease accessory protein UreD (279 aa).

This sequence belongs to the UreD family. In terms of assembly, ureD, UreF and UreG form a complex that acts as a GTP-hydrolysis-dependent molecular chaperone, activating the urease apoprotein by helping to assemble the nickel containing metallocenter of UreC. The UreE protein probably delivers the nickel.

The protein resides in the cytoplasm. Required for maturation of urease via the functional incorporation of the urease nickel metallocenter. The sequence is that of Urease accessory protein UreD from Nitrosospira multiformis (strain ATCC 25196 / NCIMB 11849 / C 71).